A 457-amino-acid chain; its full sequence is Tubulin alpha chain (457 aa).

GTP is bound by residues Gln-12, Glu-77, Ser-146, Gly-150, Thr-151, Thr-186, Asn-213, and Asn-235. Glu-77 contributes to the Mg(2+) binding site.

It belongs to the tubulin family. As to quaternary structure, dimer of alpha and beta chains. A typical microtubule is a hollow water-filled tube with an outer diameter of 25 nm and an inner diameter of 15 nM. Alpha-beta heterodimers associate head-to-tail to form protofilaments running lengthwise along the microtubule wall with the beta-tubulin subunit facing the microtubule plus end conferring a structural polarity. Microtubules usually have 13 protofilaments but different protofilament numbers can be found in some organisms and specialized cells. It depends on Mg(2+) as a cofactor. Post-translationally, undergoes a tyrosination/detyrosination cycle, the cyclic removal and re-addition of a C-terminal tyrosine residue by the enzymes tubulin tyrosine carboxypeptidase (TTCP) and tubulin tyrosine ligase (TTL), respectively.

It localises to the cytoplasm. It is found in the cytoskeleton. It carries out the reaction GTP + H2O = GDP + phosphate + H(+). Tubulin is the major constituent of microtubules, a cylinder consisting of laterally associated linear protofilaments composed of alpha- and beta-tubulin heterodimers. Microtubules grow by the addition of GTP-tubulin dimers to the microtubule end, where a stabilizing cap forms. Below the cap, tubulin dimers are in GDP-bound state, owing to GTPase activity of alpha-tubulin. The polypeptide is Tubulin alpha chain (tubA) (Dictyostelium discoideum (Social amoeba)).